Consider the following 628-residue polypeptide: MLLTTINDPQDLKKCTQPQLHTLASEIRQFLIETLSKTGGHLAPNLGVVELTLALHYVFDSPKDKLIWDVGHQAYVHKMLTGRREMFPTLRQYKGLCGFPKMVESPHDVWETGHSSTSLSAAMGMATARDLKKEKNHVVAVIGDGALTGGMALEALNHIGHERKNVIVVLNDNEMSIAPNVGALHNYLGKIRSTENYQWAKDEVEGLLKSIPAVGGKLAHMAERFKDSMKYLLVSGVLFEELGFTYIGPIDGHNMELLLDTLKTAKHTKGPVLIHAITKKGLGYAPAEADSVKWHGIGTYKIESGDTPKSAPTYTSVFADTMMKLADEDHSIVAVTPAMPAGSGLIPFGQKYPDRLFDVGIAEQHACTFAAGLATQGLKPVFAIYSTFLQRAYDQLIHDVARQKLHVIFAVDRAGLVGADGETHQGMYDVAFMRIIPNMVIMAPKDENELRHMMKTAVEYKGGPISYRYPRLPTRGVKMDEELQVLPIGKAEIVREGKHVAILSFGHVFEIAEAAVNQLQEEGIKPMLVNARFCKPLDEELLFRLAKEGYDIITVEEGSEMGGFGSAVIECYSRAGYHGMNVQIVAVPDYFVEHGSVKEQRQEVGLTADHIAARVRSLMPISKGVVEA.

Residues histidine 72 and 113–115 each bind thiamine diphosphate; that span reads GHS. Aspartate 144 serves as a coordination point for Mg(2+). Thiamine diphosphate is bound by residues 145–146, asparagine 173, tyrosine 284, and glutamate 363; that span reads GA. Asparagine 173 is a binding site for Mg(2+).

Belongs to the transketolase family. DXPS subfamily. In terms of assembly, homodimer. Requires Mg(2+) as cofactor. The cofactor is thiamine diphosphate.

The enzyme catalyses D-glyceraldehyde 3-phosphate + pyruvate + H(+) = 1-deoxy-D-xylulose 5-phosphate + CO2. Its pathway is metabolic intermediate biosynthesis; 1-deoxy-D-xylulose 5-phosphate biosynthesis; 1-deoxy-D-xylulose 5-phosphate from D-glyceraldehyde 3-phosphate and pyruvate: step 1/1. Catalyzes the acyloin condensation reaction between C atoms 2 and 3 of pyruvate and glyceraldehyde 3-phosphate to yield 1-deoxy-D-xylulose-5-phosphate (DXP). The protein is 1-deoxy-D-xylulose-5-phosphate synthase of Brevibacillus brevis (strain 47 / JCM 6285 / NBRC 100599).